The sequence spans 572 residues: Proline--tRNA ligase (572 aa).

This sequence belongs to the class-II aminoacyl-tRNA synthetase family. ProS type 1 subfamily. Homodimer. May form a tertiary complex with YbaK and t-RNA(Pro).

The protein localises to the cytoplasm. It carries out the reaction tRNA(Pro) + L-proline + ATP = L-prolyl-tRNA(Pro) + AMP + diphosphate. Catalyzes the attachment of proline to tRNA(Pro) in a two-step reaction: proline is first activated by ATP to form Pro-AMP and then transferred to the acceptor end of tRNA(Pro). As ProRS can inadvertently accommodate and process non-cognate amino acids such as alanine and cysteine, to avoid such errors it has two additional distinct editing activities against alanine. One activity is designated as 'pretransfer' editing and involves the tRNA(Pro)-independent hydrolysis of activated Ala-AMP. The other activity is designated 'posttransfer' editing and involves deacylation of mischarged Ala-tRNA(Pro). The misacylated Cys-tRNA(Pro) is not edited by ProRS, but is probably edited in trans by YbaK. The protein is Proline--tRNA ligase of Haemophilus influenzae (strain ATCC 51907 / DSM 11121 / KW20 / Rd).